The sequence spans 261 residues: MSRRRQIYEGKAKILYEGPEPGTLIQYFKDDATAFNAQKRGTINGKGVINNRISEYVFTRLAHIGIPTHFIRRLNMREQLVRQAEIIPIEVVVRNIAAGSISKRLGIEEGEPLPHTLIEYYYKDDALGDPMIAEEHIACFGWASNEEMQDISSMAIRVNDFLCGMFAAINISLVDFKLEFGRIWDGDYSRVILADEISPDGCRLWDMTTGEKLDKDRFRRDLGGEEEAYQEVARRLGLLENDGGPSEVFDLGAHRKLRGKK.

Belongs to the SAICAR synthetase family.

It carries out the reaction 5-amino-1-(5-phospho-D-ribosyl)imidazole-4-carboxylate + L-aspartate + ATP = (2S)-2-[5-amino-1-(5-phospho-beta-D-ribosyl)imidazole-4-carboxamido]succinate + ADP + phosphate + 2 H(+). It functions in the pathway purine metabolism; IMP biosynthesis via de novo pathway; 5-amino-1-(5-phospho-D-ribosyl)imidazole-4-carboxamide from 5-amino-1-(5-phospho-D-ribosyl)imidazole-4-carboxylate: step 1/2. This is Phosphoribosylaminoimidazole-succinocarboxamide synthase from Novosphingobium aromaticivorans (strain ATCC 700278 / DSM 12444 / CCUG 56034 / CIP 105152 / NBRC 16084 / F199).